A 338-amino-acid polypeptide reads, in one-letter code: MPGLKTHIIGKFKDKASIGKARLVHSFGSTAVKYIHLALLKSTTRTPNKPPNSDYVSAVISYSNSRYAPAAFSAALWRLRVTKNAIVATKSLIVIHKLIKSSRDKFEGLGHGRNNLKLNEFSDKSSNLTLELSQWIRWYGQYLDRLSWVPKVLGSFPNLLVNPKDKVEEKDRVSSYQTGYIIRQTDSLVSFFEHICTRPEIPPMFQNKIVDEIRELVIEDYFKIVRLVMVRLQVLFERLIKPGVKPIGDLGLNDFSLLLVRLVECKESLSGLFWRCRRLADDFWCLVEMLKAETEKKNNKQMIELAGLVQTTVKDDEEMIELVGSVQPEWVTFDDSDF.

Residues 27–157 form the ENTH domain; sequence FGSTAVKYIH…WVPKVLGSFP (131 aa).

The protein resides in the membrane. It is found in the clathrin-coated pit. Its subcellular location is the golgi apparatus. It localises to the cytoplasmic vesicle. The protein localises to the clathrin-coated vesicle. This chain is Putative clathrin assembly protein At5g10410, found in Arabidopsis thaliana (Mouse-ear cress).